The chain runs to 559 residues: Coiled-coil domain-containing protein 78 (559 aa).

Residues 1-19 (MDSTEDRETPLKDQIRRLT) show a composition bias toward basic and acidic residues. Residues 1–20 (MDSTEDRETPLKDQIRRLTN) form a disordered region. 2 coiled-coil regions span residues 9-327 (TPLK…ADYV) and 419-541 (QSQV…AVSA).

Belongs to the CCDC78 family. Restricted to multiciliated cells.

The protein localises to the cytoplasm. Its subcellular location is the cytoskeleton. It localises to the microtubule organizing center. It is found in the centrosome. The protein resides in the centriole. In terms of biological role, component of the deuterosome, a structure that promotes de novo centriole amplification in multiciliated cells that can generate more than 100 centrioles. Deuterosome-mediated centriole amplification occurs in terminally differentiated multiciliated cells (G1/0) and not in S phase. Essential for centriole amplification and is required for cep152 localization to the deuterosome. The sequence is that of Coiled-coil domain-containing protein 78 (ccdc78) from Xenopus laevis (African clawed frog).